Here is a 300-residue protein sequence, read N- to C-terminus: MAPSNLPAIFNPTQQDIEMLLAAQCHLGAKNLQVHMEPYLWKTRPDGVNVLNIGKTWEKIVLAARIIVAIDNPADICVISARPYGQRAVLKFASHTGATAIAGRFTPGNFTNYITRSFREPRLVIVTDPRTDAQAIKEASYVNIPVIALCDGDSPTEYVDVAIPTNNKGRHAIGLVWWMLAREVLRLRGTLANRETEWDVMTDLYFYRDPEAEENKDSAGVEEAKVPGADEVGPAAVADGFTSEWEVSGASAGAFTAQAAAAPGASWDADTTDWAASGEAQTGNEGWGTEAAAPAATTQW.

The disordered stretch occupies residues 278-300 (GEAQTGNEGWGTEAAAPAATTQW).

It belongs to the universal ribosomal protein uS2 family. In terms of assembly, component of the small ribosomal subunit. Mature ribosomes consist of a small (40S) and a large (60S) subunit. The 40S subunit contains about 33 different proteins and 1 molecule of RNA (18S). The 60S subunit contains about 49 different proteins and 3 molecules of RNA (25S, 5.8S and 5S). Interacts with rps21.

The protein resides in the cytoplasm. In terms of biological role, required for the assembly and/or stability of the 40S ribosomal subunit. Required for the processing of the 20S rRNA-precursor to mature 18S rRNA in a late step of the maturation of 40S ribosomal subunits. In Pyrenophora tritici-repentis (strain Pt-1C-BFP) (Wheat tan spot fungus), this protein is Small ribosomal subunit protein uS2 (rps0).